Reading from the N-terminus, the 662-residue chain is Probable actin-related protein 8 (662 aa).

Composition is skewed to basic and acidic residues over residues 50–59 (AGEKDAKETE) and 67–77 (TKQDDSKKSQV). The segment at 50 to 92 (AGEKDAKETESESANGDTKQDDSKKSQVEEEEDGIEESELGEE) is disordered. Acidic residues predominate over residues 78–89 (EEEEDGIEESEL). 339–342 (DMGA) lines the ATP pocket.

Belongs to the actin family. Component of the chromatin remodeling Ino80 complex. Exists as monomers and dimers, but the dimer is most probably the biologically relevant form required for stable interactions with histones that exploits the twofold symmetry of the nucleosome core.

It is found in the nucleus. Probably involved in transcription regulation via its interaction with the INO80 complex, a chromatin remodeling complex. Exhibits low basal ATPase activity, and unable to polymerize. Strongly prefer nucleosomes and H3-H4 tetramers over H2A-H2B dimers, suggesting it may act as a nucleosome recognition module within the complex. The polypeptide is Probable actin-related protein 8 (Schizosaccharomyces pombe (strain 972 / ATCC 24843) (Fission yeast)).